A 353-amino-acid polypeptide reads, in one-letter code: Phosphoribosylformylglycinamidine cyclo-ligase (353 aa).

It belongs to the AIR synthase family.

It is found in the cytoplasm. The catalysed reaction is 2-formamido-N(1)-(5-O-phospho-beta-D-ribosyl)acetamidine + ATP = 5-amino-1-(5-phospho-beta-D-ribosyl)imidazole + ADP + phosphate + H(+). Its pathway is purine metabolism; IMP biosynthesis via de novo pathway; 5-amino-1-(5-phospho-D-ribosyl)imidazole from N(2)-formyl-N(1)-(5-phospho-D-ribosyl)glycinamide: step 2/2. The polypeptide is Phosphoribosylformylglycinamidine cyclo-ligase (Symbiobacterium thermophilum (strain DSM 24528 / JCM 14929 / IAM 14863 / T)).